The primary structure comprises 121 residues: Large ribosomal subunit protein uL18 (121 aa).

The protein belongs to the universal ribosomal protein uL18 family. Part of the 50S ribosomal subunit; part of the 5S rRNA/L5/L18/L25 subcomplex. Contacts the 5S and 23S rRNAs.

This is one of the proteins that bind and probably mediate the attachment of the 5S RNA into the large ribosomal subunit, where it forms part of the central protuberance. The sequence is that of Large ribosomal subunit protein uL18 from Spiroplasma kunkelii.